The primary structure comprises 295 residues: tRNA-cytidine(32) 2-sulfurtransferase (295 aa).

A PP-loop motif motif is present at residues 63–68; sequence SGGKDS. Residues Cys-138, Cys-141, and Cys-229 each contribute to the [4Fe-4S] cluster site.

The protein belongs to the TtcA family. In terms of assembly, homodimer. It depends on Mg(2+) as a cofactor. Requires [4Fe-4S] cluster as cofactor.

It localises to the cytoplasm. The enzyme catalyses cytidine(32) in tRNA + S-sulfanyl-L-cysteinyl-[cysteine desulfurase] + AH2 + ATP = 2-thiocytidine(32) in tRNA + L-cysteinyl-[cysteine desulfurase] + A + AMP + diphosphate + H(+). The protein operates within tRNA modification. Catalyzes the ATP-dependent 2-thiolation of cytidine in position 32 of tRNA, to form 2-thiocytidine (s(2)C32). The sulfur atoms are provided by the cysteine/cysteine desulfurase (IscS) system. The polypeptide is tRNA-cytidine(32) 2-sulfurtransferase (Hyphomonas neptunium (strain ATCC 15444)).